Consider the following 244-residue polypeptide: Nodulation protein G (244 aa).

11 to 35 (VTGASGAIGGAIARVLHAQGAIVGL) contributes to the NAD(+) binding site. A substrate-binding site is contributed by S139. The active-site Proton acceptor is the Y152.

Belongs to the short-chain dehydrogenases/reductases (SDR) family.

Proposed to modify Nod factor fatty acyl chain. This Rhizobium meliloti (Ensifer meliloti) protein is Nodulation protein G (nodG).